A 482-amino-acid chain; its full sequence is Carbamoyl phosphate synthase large chain, N-terminal section (482 aa).

Positions 1–398 (MESIKKVMVF…ALQKAIRSLD (398 aa)) are carboxyphosphate synthetic domain. 12 residues coordinate ATP: Arg-126, Arg-166, Gly-172, Gly-173, Glu-205, Val-207, Glu-212, Gly-238, Ile-239, His-240, Gln-281, and Glu-295. Positions 130–324 (AEAMAEINEP…IARIAAKIAI (195 aa)) constitute an ATP-grasp domain. Mg(2+) contacts are provided by Gln-281, Glu-295, and Asn-297. Mn(2+) contacts are provided by Gln-281, Glu-295, and Asn-297.

The protein belongs to the CarB family. As to quaternary structure, composed of two chains; the small (or glutamine) chain promotes the hydrolysis of glutamine to ammonia, which is used by the large (or ammonia) chain to synthesize carbamoyl phosphate. Tetramer of heterodimers (alpha,beta)4. It depends on Mg(2+) as a cofactor. Requires Mn(2+) as cofactor.

The catalysed reaction is hydrogencarbonate + L-glutamine + 2 ATP + H2O = carbamoyl phosphate + L-glutamate + 2 ADP + phosphate + 2 H(+). The enzyme catalyses hydrogencarbonate + NH4(+) + 2 ATP = carbamoyl phosphate + 2 ADP + phosphate + 2 H(+). The protein operates within amino-acid biosynthesis; L-arginine biosynthesis; carbamoyl phosphate from bicarbonate: step 1/1. It participates in pyrimidine metabolism; UMP biosynthesis via de novo pathway; (S)-dihydroorotate from bicarbonate: step 1/3. Large subunit of the glutamine-dependent carbamoyl phosphate synthetase (CPSase). CPSase catalyzes the formation of carbamoyl phosphate from the ammonia moiety of glutamine, carbonate, and phosphate donated by ATP, constituting the first step of 2 biosynthetic pathways, one leading to arginine and/or urea and the other to pyrimidine nucleotides. The large subunit (synthetase) binds the substrates ammonia (free or transferred from glutamine from the small subunit), hydrogencarbonate and ATP and carries out an ATP-coupled ligase reaction, activating hydrogencarbonate by forming carboxy phosphate which reacts with ammonia to form carbamoyl phosphate. The protein is Carbamoyl phosphate synthase large chain, N-terminal section (carB1) of Methanocaldococcus jannaschii (strain ATCC 43067 / DSM 2661 / JAL-1 / JCM 10045 / NBRC 100440) (Methanococcus jannaschii).